The primary structure comprises 256 residues: Sugar fermentation stimulation protein homolog (256 aa).

Residues 128 to 141 (TGSTDTSFSGTPPT) show a composition bias toward low complexity. The tract at residues 128 to 149 (TGSTDTSFSGTPPTNTEPANTK) is disordered.

This sequence belongs to the SfsA family.

The protein is Sugar fermentation stimulation protein homolog of Shewanella sediminis (strain HAW-EB3).